The primary structure comprises 624 residues: Polycomb group protein EMF2A (624 aa).

A C2H2-type zinc finger spans residues 338 to 359; it reads CPFCLVRCGNFKGLECHMTSSH. Residues 420–445 form a disordered region; the sequence is DAHIMESGSPEETQAESEDDVQEENE. A compositionally biased stretch (acidic residues) spans 432–445; the sequence is TQAESEDDVQEENE. The segment at 474–609 is VEFS-box; sequence LSANRADPRN…SARTMDTCNR (136 aa).

The protein belongs to the VEFS (VRN2-EMF2-FIS2-SU(Z)12) family. In terms of assembly, component of the polycomb repressive complex 2 (PRC2), which methylates 'Lys-27' residues of histone H3 (H3K27me3), leading to transcriptional repression of the affected target gene. As to expression, widely expressed. Highly expressed in shoot apical meristem and inflorescence meristem. Expressed in roots, leaves and immature seeds.

Polycomb group (PcG) protein. PcG proteins act by forming multiprotein complexes, which are required to maintain the transcriptionally repressive state of homeotic genes throughout development. PcG proteins are not required to initiate repression, but to maintain it during later stages of development. They act via the methylation of histones, rendering chromatin heritably changed in its expressibility. The chain is Polycomb group protein EMF2A from Oryza sativa subsp. japonica (Rice).